Consider the following 102-residue polypeptide: Large ribosomal subunit protein bL21 (102 aa).

This sequence belongs to the bacterial ribosomal protein bL21 family. As to quaternary structure, part of the 50S ribosomal subunit. Contacts protein L20.

This protein binds to 23S rRNA in the presence of protein L20. The protein is Large ribosomal subunit protein bL21 of Campylobacter hominis (strain ATCC BAA-381 / DSM 21671 / CCUG 45161 / LMG 19568 / NCTC 13146 / CH001A).